Here is a 281-residue protein sequence, read N- to C-terminus: 2,3,4,5-tetrahydropyridine-2,6-dicarboxylate N-succinyltransferase (281 aa).

Belongs to the transferase hexapeptide repeat family.

The protein resides in the cytoplasm. The catalysed reaction is (S)-2,3,4,5-tetrahydrodipicolinate + succinyl-CoA + H2O = (S)-2-succinylamino-6-oxoheptanedioate + CoA. It functions in the pathway amino-acid biosynthesis; L-lysine biosynthesis via DAP pathway; LL-2,6-diaminopimelate from (S)-tetrahydrodipicolinate (succinylase route): step 1/3. The chain is 2,3,4,5-tetrahydropyridine-2,6-dicarboxylate N-succinyltransferase from Methylobacterium sp. (strain 4-46).